The following is a 487-amino-acid chain: 2-aminomuconic semialdehyde dehydrogenase (487 aa).

Residue 231–236 (GSQPTA) coordinates NAD(+). The Proton acceptor role is filled by glutamate 253. Catalysis depends on cysteine 287, which acts as the Nucleophile. Serine 362 is subject to Phosphoserine.

The protein belongs to the aldehyde dehydrogenase family. Detected in hepatocytes and in proximal and distal convoluted tubules in kidney cortex (at protein level). Highly expressed in adult liver and in kidney cortex. First detected in embryonic liver after 15 days of development.

The protein localises to the cytoplasm. The catalysed reaction is 2-aminomuconate 6-semialdehyde + NAD(+) + H2O = (2Z,4E)-2-aminomuconate + NADH + 2 H(+). The protein operates within amino-acid degradation; L-kynurenine degradation. In terms of biological role, catalyzes the NAD-dependent oxidation of 2-aminomuconic semialdehyde of the kynurenine metabolic pathway in L-tryptophan degradation. The chain is 2-aminomuconic semialdehyde dehydrogenase (Aldh8a1) from Mus musculus (Mouse).